The chain runs to 132 residues: Peptide methionine sulfoxide reductase MsrB (132 aa).

In terms of domain architecture, MsrB spans 8-130 (LDSWREELTE…NSASLKLVPR (123 aa)). Residues Cys-47, Cys-50, Cys-96, and Cys-99 each contribute to the Zn(2+) site. Catalysis depends on Cys-119, which acts as the Nucleophile.

It belongs to the MsrB Met sulfoxide reductase family. Zn(2+) serves as cofactor.

The catalysed reaction is L-methionyl-[protein] + [thioredoxin]-disulfide + H2O = L-methionyl-(R)-S-oxide-[protein] + [thioredoxin]-dithiol. The sequence is that of Peptide methionine sulfoxide reductase MsrB from Pseudomonas aeruginosa (strain UCBPP-PA14).